The following is a 198-amino-acid chain: 7-methyl-GTP pyrophosphatase (198 aa).

Catalysis depends on D75, which acts as the Proton acceptor.

Belongs to the Maf family. YceF subfamily. It depends on a divalent metal cation as a cofactor.

The protein localises to the cytoplasm. It catalyses the reaction N(7)-methyl-GTP + H2O = N(7)-methyl-GMP + diphosphate + H(+). Its function is as follows. Nucleoside triphosphate pyrophosphatase that hydrolyzes 7-methyl-GTP (m(7)GTP). May have a dual role in cell division arrest and in preventing the incorporation of modified nucleotides into cellular nucleic acids. This chain is 7-methyl-GTP pyrophosphatase, found in Bartonella henselae (strain ATCC 49882 / DSM 28221 / CCUG 30454 / Houston 1) (Rochalimaea henselae).